The following is a 440-amino-acid chain: MLDCYVVKEVSNDKLKWEYEFVIDKKYFLDQLDSKLSEIAKNVKVPGFRVGKASIDLVKKEYLNDVMTDVVRKTIESTSSDFVKSNKFGEIISSNIDIVSYPNYYSDNDSKEENLVYKLSFEVMPEAPLMDIDSIVLNGIEVDIQESDVSEFIENLKKQRPNFIVVNGAEYAVQEGDKVVIDYQNKVKGKILRGGSAKDFALVIGKGVALKEFENQLLGMRVGETKSFPLTFPDDYSVAYLAGKTTDMSVVVKSIYVVKDVQDNESVARSYGFKDVAEMENFVRKQIGQQFDQMVLTIMKKELFDYMDNTYSIDVPECVVKQEITKINKEILDSGEDIQIDVEKEAVRRVKLGMLLIRMSRHNNITIKNEDVLSFIKNNYTDYGVDINNVLKMLQSNKNFANYISGKVLEDKVINYIIKLVKKDRKVMTTKEINLMFENI.

One can recognise a PPIase FKBP-type domain in the interval 176-261; that stretch reads GDKVVIDYQN…VKSIYVVKDV (86 aa).

The protein belongs to the FKBP-type PPIase family. Tig subfamily.

Its subcellular location is the cytoplasm. The enzyme catalyses [protein]-peptidylproline (omega=180) = [protein]-peptidylproline (omega=0). Its function is as follows. Involved in protein export. Acts as a chaperone by maintaining the newly synthesized protein in an open conformation. Functions as a peptidyl-prolyl cis-trans isomerase. The chain is Trigger factor from Ehrlichia canis (strain Jake).